A 100-amino-acid chain; its full sequence is Urease subunit gamma (100 aa).

Belongs to the urease gamma subunit family. As to quaternary structure, heterotrimer of UreA (gamma), UreB (beta) and UreC (alpha) subunits. Three heterotrimers associate to form the active enzyme.

The protein localises to the cytoplasm. It catalyses the reaction urea + 2 H2O + H(+) = hydrogencarbonate + 2 NH4(+). Its pathway is nitrogen metabolism; urea degradation; CO(2) and NH(3) from urea (urease route): step 1/1. The polypeptide is Urease subunit gamma (Bacillus cereus (strain ATCC 10987 / NRS 248)).